The sequence spans 977 residues: Alanine--tRNA ligase (977 aa).

The tract at residues S512 to S535 is disordered. Positions 618, 622, 720, and 724 each coordinate Zn(2+).

The protein belongs to the class-II aminoacyl-tRNA synthetase family. Requires Zn(2+) as cofactor.

The protein resides in the cytoplasm. It catalyses the reaction tRNA(Ala) + L-alanine + ATP = L-alanyl-tRNA(Ala) + AMP + diphosphate. Its function is as follows. Catalyzes the attachment of alanine to tRNA(Ala) in a two-step reaction: alanine is first activated by ATP to form Ala-AMP and then transferred to the acceptor end of tRNA(Ala). Also edits incorrectly charged Ser-tRNA(Ala) and Gly-tRNA(Ala) via its editing domain. The chain is Alanine--tRNA ligase from Leptospira interrogans serogroup Icterohaemorrhagiae serovar Lai (strain 56601).